Here is a 701-residue protein sequence, read N- to C-terminus: F-box/LRR-repeat protein 17 (701 aa).

Disordered regions lie at residues 73-93, 227-250, and 279-321; these read SAGL…RDGA, GGGG…CQAP, and VRAG…IPDI. Over residues 81–90 the composition is skewed to pro residues; the sequence is PLSPPPPPPR. Residues 227 to 236 are compositionally biased toward gly residues; that stretch reads GGGGPAGGGA. Over residues 285–294 the composition is skewed to polar residues; the sequence is APSSAQQQPE. The 48-residue stretch at 318-365 folds into the F-box domain; the sequence is IPDINQLPPSILLKIFSNLSLNERCLSASLVCKYWRDLCLDFQFWKQL.

The protein belongs to the FBXL17 family. In terms of assembly, part of the SCF (SKP1-CUL1-F-box) E3 ubiquitin-protein ligase complex SCF(FBXL17) composed of CUL1, SKP1, RBX1 and FBXL17. Interacts with BTB domain-containing proteins such as KLHL12, BCL6 and BACH1; specifically recognizes and binds a conserved degron of non-consecutive residues present at the interface of BTB dimers of aberrant composition. Interacts with SUFU. Interacts with PRMT1.

The protein resides in the cytoplasm. It is found in the nucleus. Substrate-recognition component of the SCF(FBXL17) E3 ubiquitin ligase complex, a key component of a quality control pathway required to ensure functional dimerization of BTB domain-containing proteins (dimerization quality control, DQC). FBXL17 specifically recognizes and binds a conserved degron of non-consecutive residues present at the interface of BTB dimers of aberrant composition: aberrant BTB dimer are then ubiquitinated by the SCF(FBXL17) complex and degraded by the proteasome. The ability of the SCF(FBXL17) complex to eliminate compromised BTB dimers is required for the differentiation and survival of neural crest and neuronal cells. The SCF(FBXL17) complex mediates ubiquitination and degradation of BACH1. The SCF(FBXL17) complex is also involved in the regulation of the hedgehog/smoothened (Hh) signaling pathway by mediating the ubiquitination and degradation of SUFU, allowing the release of GLI1 from SUFU for proper Hh signal transduction. The SCF(FBXL17) complex mediates ubiquitination and degradation of PRMT1. The protein is F-box/LRR-repeat protein 17 of Mus musculus (Mouse).